Consider the following 203-residue polypeptide: Outer-membrane lipoprotein LolB (203 aa).

The first 17 residues, 1–17, serve as a signal peptide directing secretion; that stretch reads MNRLFRLLPLASLVLTA. Cys18 is lipidated: N-palmitoyl cysteine. Residue Cys18 is the site of S-diacylglycerol cysteine attachment.

It belongs to the LolB family. In terms of assembly, monomer.

It is found in the cell outer membrane. Its function is as follows. Plays a critical role in the incorporation of lipoproteins in the outer membrane after they are released by the LolA protein. The protein is Outer-membrane lipoprotein LolB of Klebsiella pneumoniae subsp. pneumoniae (strain ATCC 700721 / MGH 78578).